The following is a 1132-amino-acid chain: APC membrane recruitment protein 1 (1132 aa).

Position 1 is an N-acetylmethionine (M1). Polar residues predominate over residues 1–21; sequence MESQQDEAVQTKGASTSSDAQ. Disordered stretches follow at residues 1–256, 268–301, 338–423, 469–505, 674–699, 736–770, 924–949, and 1038–1132; these read MESQ…ACKN, FMQP…NPPN, SMTD…GEEN, GLGE…DSGE, TSGG…EPDW, MQEA…GNAT, ELQA…DSPL, and SQAS…NLAK. Basic and acidic residues predominate over residues 24–35; it reads GAEKGAKNKTTE. Positions 121–133 are enriched in low complexity; sequence SKSSAQFPSSQSA. Basic and acidic residues-rich tracts occupy residues 195–208, 218–229, and 281–290; these read KELE…HEHV, EIFRDTRKENAK, and EEPHTSETEG. Residues 372–423 show a composition bias toward acidic residues; the sequence is ALPDDDDNDDEEEEEEEEEEEEEEEEEEEEEEEEEEEELLEDEEEVKDGEEN. Polar residues-rich tracts occupy residues 475-486 and 677-696; these read TPQSDQQESAPN and GSQT…SSSE. 2 stretches are compositionally biased toward acidic residues: residues 756–765 and 931–941; these read EEPEEEEEEK and DSDEEGEEEEG. 2 stretches are compositionally biased toward polar residues: residues 1059–1072 and 1115–1132; these read SCSS…QSQA and ASLS…NLAK.

Belongs to the Amer family. In terms of assembly, interacts with CTNNB1, AXIN1, LRP6, KEAP1, APC and BTRC. Interacts with SCF (SKP1-CUL1-F-box protein) E3 ubiquitin-protein ligase complexes containing BTRC and/or FBXW11. Identified in the beta-catenin destruction complex containing CTNNB1, APC, AXIN1 and AXIN2. Interacts with WT1. Expressed in kidney.

The protein resides in the cytoplasm. It is found in the cell membrane. Its subcellular location is the nucleus. Functionally, regulator of the canonical Wnt signaling pathway. Acts by specifically binding phosphatidylinositol 4,5-bisphosphate (PtdIns(4,5)P2), translocating to the cell membrane and interacting with key regulators of the canonical Wnt signaling pathway, such as components of the beta-catenin destruction complex. Acts both as a positive and negative regulator of the Wnt signaling pathway, depending on the context: acts as a positive regulator by promoting LRP6 phosphorylation. Also acts as a negative regulator by acting as a scaffold protein for the beta-catenin destruction complex and promoting stabilization of Axin at the cell membrane. Promotes CTNNB1 ubiquitination and degradation. Involved in kidney development. This Mus musculus (Mouse) protein is APC membrane recruitment protein 1 (Amer1).